A 234-amino-acid polypeptide reads, in one-letter code: NLP effector protein Pc576423 (234 aa).

The first 18 residues, 1–18, serve as a signal peptide directing secretion; it reads MNLRAIAVTFATFAGANA. N-linked (GlcNAc...) asparagine glycans are attached at residues N35 and N66. The Hepta-peptide GHRHDWE motif motif lies at 119-125; sequence GHRHDWE.

This sequence belongs to the Necrosis inducing protein (NPP1) family.

It localises to the secreted. In terms of biological role, secreted effector that contributes strongly to virulence during infection by P.capsici. This chain is NLP effector protein Pc576423, found in Phytophthora capsici.